Reading from the N-terminus, the 262-residue chain is Zinc finger protein ehn-3 (262 aa).

4 consecutive C2H2-type zinc fingers follow at residues 2 to 24 (EKCD…KVMH), 30 to 52 (FECQ…MMTH), 59 to 84 (FECP…DSEH), and 92 to 115 (AKCK…HTAH). Residues 179 to 204 (SVKSAKELSPTPSTEIETPEEEELDG) are disordered. A compositionally biased stretch (low complexity) spans 185 to 194 (ELSPTPSTEI). Residues 195–204 (ETPEEEELDG) show a composition bias toward acidic residues. 2 C2H2-type zinc fingers span residues 208-230 (WYCD…SGLH) and 236-260 (FKCS…YANH).

This sequence belongs to the krueppel C2H2-type zinc-finger protein family.

It localises to the nucleus. Its function is as follows. Together with the zinc finger protein ztf-16, plays a role in gonadogenesis, specifically in somatic gonad precursor cell development. This is possibly by regulating tra-1 gene expression. Functionally, required for proper gonadal primordium assembly and somatic gonad precursor cell morphology. The sequence is that of Zinc finger protein ehn-3 from Caenorhabditis elegans.